The chain runs to 45 residues: Lysis protein for colicin E1* (45 aa).

The N-terminal stretch at 1 to 17 is a signal peptide; that stretch reads MRKRFFVGIFAINLLVG. Residue C18 is the site of N-palmitoyl cysteine attachment. C18 carries S-diacylglycerol cysteine lipidation.

The protein resides in the cell outer membrane. In terms of biological role, lysis proteins are required for both colicin release and partial cell lysis. This is Lysis protein for colicin E1* (kil) from Shigella sonnei.